Here is a 139-residue protein sequence, read N- to C-terminus: Protein archease (139 aa).

Ca(2+) is bound by residues aspartate 12, aspartate 138, and isoleucine 139.

The protein belongs to the archease family.

Its function is as follows. Activates the tRNA-splicing ligase complex by facilitating the enzymatic turnover of catalytic subunit RtcB. Acts by promoting the guanylylation of RtcB, a key intermediate step in tRNA ligation. Can also alter the NTP specificity of RtcB such that ATP, dGTP or ITP is used efficiently. In Saccharolobus solfataricus (strain ATCC 35092 / DSM 1617 / JCM 11322 / P2) (Sulfolobus solfataricus), this protein is Protein archease.